The chain runs to 199 residues: Chromophore lyase CpcT/CpeT (199 aa).

Belongs to the CpcT/CpeT biliprotein lyase family.

Its function is as follows. Covalently attaches a chromophore to Cys residue(s) of phycobiliproteins. The chain is Chromophore lyase CpcT/CpeT from Prochlorococcus marinus (strain NATL1A).